The chain runs to 3948 residues: Hybrid PKS-NRPS synthetase fsa1 (3948 aa).

The Ketosynthase family 3 (KS3) domain occupies 4–438 (SEPIAVIGSA…GTNAHAIIEA (435 aa)). Residues cysteine 177, histidine 316, and histidine 358 each act as for beta-ketoacyl synthase activity in the active site. Residues 543–846 (IFTGQGTQWP…LDTIEAISEG (304 aa)) are malonyl-CoA:ACP transacylase (MAT) domain. Residues 931 to 1066 (HPLLGRRCHD…AQIKASLGTP (136 aa)) form an N-terminal hotdog fold region. Residues 931 to 1233 (HPLLGRRCHD…MELVPFSPAT (303 aa)) are dehydratase (DH) domain. Residues 931-1235 (HPLLGRRCHD…LVPFSPATPA (305 aa)) form the PKS/mFAS DH domain. Histidine 964 acts as the Proton acceptor; for dehydratase activity in catalysis. Residues 1081–1235 (LRPVSVDRFY…LVPFSPATPA (155 aa)) are C-terminal hotdog fold. Aspartate 1141 (proton donor; for dehydratase activity) is an active-site residue. Positions 1381 to 1578 (YEQGFGLNLV…TTPPVHKILP (198 aa)) are methyltransferase (MT) domain. The interval 2105-2277 (TFLLIGLTGE…VAASSIDISS (173 aa)) is ketoreductase (KR) domain. One can recognise a Carrier 1 domain in the interval 2389-2464 (AIIKESFIVR…DLVDESLDLL (76 aa)). Serine 2424 is modified (O-(pantetheine 4'-phosphoryl)serine). A disordered region spans residues 2475–2555 (EAGNAHPAKP…TDNLTPPRTF (81 aa)). 2 stretches are compositionally biased toward polar residues: residues 2487 to 2505 (VIPQ…QGTS) and 2513 to 2528 (GSDS…LTSW). The segment covering 2529 to 2541 (DRQDLSPPDKSDD) has biased composition (basic and acidic residues). Polar residues predominate over residues 2542–2551 (APNSTDNLTP). Positions 2547–2976 (DNLTPPRTFP…TQVLLRSYLS (430 aa)) are condensation (C) domain. The adenylation (A) (KR) domain stretch occupies residues 3000 to 3402 (LKVAVDAGKA…PDTFFGTSGT (403 aa)). The region spanning 3540-3617 (KSLTASEKRL…AMASVLEDCG (78 aa)) is the Carrier 2 domain. Serine 3577 is subject to O-(pantetheine 4'-phosphoryl)serine. The interval 3653-3870 (LTGSSGYLGR…MPVNEIVEAI (218 aa)) is reductase (RED) domain.

It in the C-terminal section; belongs to the NRP synthetase family.

The enzyme catalyses L-serine + 7 malonyl-CoA + acetyl-CoA + 2 S-adenosyl-L-methionine + ATP + 8 NADPH + 11 H(+) = (5S)-3-[(2E,6R,8E,10E,12E)-2,6-dimethyltetradeca-2,8,10,12-tetraenoyl]-5-(hydroxymethyl)pyrrolidine-2,4-dione + AMP + 2 S-adenosyl-L-homocysteine + 7 CO2 + diphosphate + 8 NADP(+) + 8 CoA + 6 H2O. It participates in mycotoxin biosynthesis. Hybrid PKS-NRPS synthetase; part of the gene cluster that mediates the biosynthesis of HIV-1 integrase inhibitor equisetin and of fusarisetin A, both trans-fused decalin-containing tetramic acids showing also antimicrobial activity. The PKS module of fsa1 together with the enoylreductase fsa3 catalyze the formation of the polyketide unit which is then conjugated to L-serine by the condensation domain of the fsa1 NRPS module. Activity of the Dieckmann cyclase domain (RED) results in release of the Dieckmann product intermediate. Diels-Alderase fsa2 is involved in endo-selective Diels-Alder cycloaddition to form the decalin ring, leading to the production of N-desmethylequisetin also called trichosetin. Subsequent N-methylation is carried out by fsa4 to give equisetin. The enzymatic gene responsible for the conversion of equisetin to fusarisetin A has not been identified yet and is probably located outside of the fsa cluster. This Fusarium sp. (strain FN080326) protein is Hybrid PKS-NRPS synthetase fsa1.